A 339-amino-acid polypeptide reads, in one-letter code: RNA 3'-terminal phosphate cyclase (339 aa).

ATP contacts are provided by residues Asp-109 and 286–290 (HLADQ). Catalysis depends on His-310, which acts as the Tele-AMP-histidine intermediate.

This sequence belongs to the RNA 3'-terminal cyclase family. Type 1 subfamily.

The protein localises to the cytoplasm. The enzyme catalyses a 3'-end 3'-phospho-ribonucleotide-RNA + ATP = a 3'-end 2',3'-cyclophospho-ribonucleotide-RNA + AMP + diphosphate. Its function is as follows. Catalyzes the conversion of 3'-phosphate to a 2',3'-cyclic phosphodiester at the end of RNA. The mechanism of action of the enzyme occurs in 3 steps: (A) adenylation of the enzyme by ATP; (B) transfer of adenylate to an RNA-N3'P to produce RNA-N3'PP5'A; (C) and attack of the adjacent 2'-hydroxyl on the 3'-phosphorus in the diester linkage to produce the cyclic end product. The biological role of this enzyme is unknown but it is likely to function in some aspects of cellular RNA processing. This Halobacterium salinarum (strain ATCC 29341 / DSM 671 / R1) protein is RNA 3'-terminal phosphate cyclase.